Reading from the N-terminus, the 158-residue chain is NAD(P)H-quinone oxidoreductase subunit N (158 aa).

The protein belongs to the complex I NdhN subunit family. In terms of assembly, NDH-1 can be composed of about 15 different subunits; different subcomplexes with different compositions have been identified which probably have different functions.

The protein localises to the cellular thylakoid membrane. The enzyme catalyses a plastoquinone + NADH + (n+1) H(+)(in) = a plastoquinol + NAD(+) + n H(+)(out). The catalysed reaction is a plastoquinone + NADPH + (n+1) H(+)(in) = a plastoquinol + NADP(+) + n H(+)(out). In terms of biological role, NDH-1 shuttles electrons from an unknown electron donor, via FMN and iron-sulfur (Fe-S) centers, to quinones in the respiratory and/or the photosynthetic chain. The immediate electron acceptor for the enzyme in this species is believed to be plastoquinone. Couples the redox reaction to proton translocation, and thus conserves the redox energy in a proton gradient. Cyanobacterial NDH-1 also plays a role in inorganic carbon-concentration. The chain is NAD(P)H-quinone oxidoreductase subunit N from Trichodesmium erythraeum (strain IMS101).